The primary structure comprises 382 residues: Succinate--CoA ligase [ADP-forming] subunit beta (382 aa).

ATP is bound by residues K46, 53–55, V95, and E100; that span reads GRG. 2 residues coordinate Mg(2+): N192 and D206. Residues N257 and 314–316 each bind substrate; that span reads GIT.

This sequence belongs to the succinate/malate CoA ligase beta subunit family. Heterotetramer of two alpha and two beta subunits. Mg(2+) is required as a cofactor.

It carries out the reaction succinate + ATP + CoA = succinyl-CoA + ADP + phosphate. The catalysed reaction is GTP + succinate + CoA = succinyl-CoA + GDP + phosphate. It functions in the pathway carbohydrate metabolism; tricarboxylic acid cycle; succinate from succinyl-CoA (ligase route): step 1/1. Succinyl-CoA synthetase functions in the citric acid cycle (TCA), coupling the hydrolysis of succinyl-CoA to the synthesis of either ATP or GTP and thus represents the only step of substrate-level phosphorylation in the TCA. The beta subunit provides nucleotide specificity of the enzyme and binds the substrate succinate, while the binding sites for coenzyme A and phosphate are found in the alpha subunit. This is Succinate--CoA ligase [ADP-forming] subunit beta from Bacteroides fragilis (strain ATCC 25285 / DSM 2151 / CCUG 4856 / JCM 11019 / LMG 10263 / NCTC 9343 / Onslow / VPI 2553 / EN-2).